The sequence spans 225 residues: Endonuclease V (225 aa).

Positions 43 and 110 each coordinate Mg(2+). Interaction with target DNA regions lie at residues 139 to 141 (KSR) and 214 to 221 (HIYTQRLK).

The protein belongs to the endonuclease V family. Mg(2+) is required as a cofactor.

It is found in the cytoplasm. It carries out the reaction Endonucleolytic cleavage at apurinic or apyrimidinic sites to products with a 5'-phosphate.. Its function is as follows. DNA repair enzyme involved in the repair of deaminated bases. Selectively cleaves double-stranded DNA at the second phosphodiester bond 3' to a deoxyinosine leaving behind the intact lesion on the nicked DNA. In vitro, can also cleave single-stranded substrates with inosine, double-stranded DNA with apurinic sites, or DNA sites with uracil or a mismatched base. When present in molar excess, two protein molecules can bind to the same DNA substrate and effect cleavage of both strands (in vitro). This chain is Endonuclease V, found in Thermotoga maritima (strain ATCC 43589 / DSM 3109 / JCM 10099 / NBRC 100826 / MSB8).